A 362-amino-acid chain; its full sequence is S-adenosylmethionine decarboxylase proenzyme (362 aa).

Catalysis depends on residues Glu13 and Glu16. The Schiff-base intermediate with substrate; via pyruvic acid role is filled by Ser73. Position 73 is a pyruvic acid (Ser); by autocatalysis (Ser73). Cys87 (proton donor; for catalytic activity) is an active-site residue. Residues Ser236 and His249 each act as proton acceptor; for processing activity in the active site.

The protein belongs to the eukaryotic AdoMetDC family. It depends on pyruvate as a cofactor. Is synthesized initially as an inactive proenzyme. Formation of the active enzyme involves a self-maturation process in which the active site pyruvoyl group is generated from an internal serine residue via an autocatalytic post-translational modification. Two non-identical subunits are generated from the proenzyme in this reaction, and the pyruvate is formed at the N-terminus of the alpha chain, which is derived from the carboxyl end of the proenzyme. The post-translation cleavage follows an unusual pathway, termed non-hydrolytic serinolysis, in which the side chain hydroxyl group of the serine supplies its oxygen atom to form the C-terminus of the beta chain, while the remainder of the serine residue undergoes an oxidative deamination to produce ammonia and the pyruvoyl group blocking the N-terminus of the alpha chain.

The catalysed reaction is S-adenosyl-L-methionine + H(+) = S-adenosyl 3-(methylsulfanyl)propylamine + CO2. Its pathway is amine and polyamine biosynthesis; S-adenosylmethioninamine biosynthesis; S-adenosylmethioninamine from S-adenosyl-L-methionine: step 1/1. The sequence is that of S-adenosylmethionine decarboxylase proenzyme (SAMDC) from Datura stramonium (Jimsonweed).